Consider the following 283-residue polypeptide: Pantothenate synthetase 2 (283 aa).

34–41 (MGALHDGH) provides a ligand contact to ATP. His41 (proton donor) is an active-site residue. Gln65 is a binding site for (R)-pantoate. Gln65 lines the beta-alanine pocket. 152–155 (GEKD) contacts ATP. Residue Gln158 participates in (R)-pantoate binding. Residues Val181 and 189–192 (MSSR) each bind ATP.

It belongs to the pantothenate synthetase family. In terms of assembly, homodimer.

The protein localises to the cytoplasm. It catalyses the reaction (R)-pantoate + beta-alanine + ATP = (R)-pantothenate + AMP + diphosphate + H(+). It functions in the pathway cofactor biosynthesis; (R)-pantothenate biosynthesis; (R)-pantothenate from (R)-pantoate and beta-alanine: step 1/1. Catalyzes the condensation of pantoate with beta-alanine in an ATP-dependent reaction via a pantoyl-adenylate intermediate. This Bradyrhizobium diazoefficiens (strain JCM 10833 / BCRC 13528 / IAM 13628 / NBRC 14792 / USDA 110) protein is Pantothenate synthetase 2.